A 355-amino-acid polypeptide reads, in one-letter code: tRNA N6-adenosine threonylcarbamoyltransferase (355 aa).

Fe cation contacts are provided by histidine 111 and histidine 115. Substrate contacts are provided by residues 134-138 (LVSGG), aspartate 167, glycine 180, aspartate 184, and asparagine 279. A Fe cation-binding site is contributed by aspartate 307.

It belongs to the KAE1 / TsaD family. It depends on Fe(2+) as a cofactor.

The protein localises to the cytoplasm. It catalyses the reaction L-threonylcarbamoyladenylate + adenosine(37) in tRNA = N(6)-L-threonylcarbamoyladenosine(37) in tRNA + AMP + H(+). Its function is as follows. Required for the formation of a threonylcarbamoyl group on adenosine at position 37 (t(6)A37) in tRNAs that read codons beginning with adenine. Is involved in the transfer of the threonylcarbamoyl moiety of threonylcarbamoyl-AMP (TC-AMP) to the N6 group of A37, together with TsaE and TsaB. TsaD likely plays a direct catalytic role in this reaction. In Picosynechococcus sp. (strain ATCC 27264 / PCC 7002 / PR-6) (Agmenellum quadruplicatum), this protein is tRNA N6-adenosine threonylcarbamoyltransferase.